Consider the following 545-residue polypeptide: Membrane protein insertase YidC (545 aa).

The next 4 membrane-spanning stretches (helical) occupy residues 350 to 370, 424 to 444, 461 to 481, and 498 to 518; these read IIGNWGWAIVVLTIIVKAVLY, LPMLLQIPVFIGLYWALFASV, ADPYYILPIIMAATMFAQTYL, and PLVFSVMFFFFPAGLVLYWVV.

Belongs to the OXA1/ALB3/YidC family. Type 1 subfamily. In terms of assembly, interacts with the Sec translocase complex via SecD. Specifically interacts with transmembrane segments of nascent integral membrane proteins during membrane integration.

Its subcellular location is the cell inner membrane. Required for the insertion and/or proper folding and/or complex formation of integral membrane proteins into the membrane. Involved in integration of membrane proteins that insert both dependently and independently of the Sec translocase complex, as well as at least some lipoproteins. Aids folding of multispanning membrane proteins. This Neisseria gonorrhoeae (strain NCCP11945) protein is Membrane protein insertase YidC.